The primary structure comprises 87 residues: Small ribosomal subunit protein bS20 (87 aa).

The segment covering 1–11 has biased composition (basic residues); it reads MANIKSAKKRA. The disordered stretch occupies residues 1–27; that stretch reads MANIKSAKKRAVQSEKRRQHNASQRSM.

The protein belongs to the bacterial ribosomal protein bS20 family.

Functionally, binds directly to 16S ribosomal RNA. This chain is Small ribosomal subunit protein bS20, found in Actinobacillus succinogenes (strain ATCC 55618 / DSM 22257 / CCUG 43843 / 130Z).